The following is a 402-amino-acid chain: QKPGETKEVHPQLTTFRCTKRGGCKPATNFIVLDSLSHPIHRAEGLGPGGCGDWGNPPPKDVCPDVESCAKNCIMEGIPDYSQYGVTTNGTSLRLQHILPDGRVPSPRVYLLDKTKRRYEMLHLTGFEFTFDVDATKLPCGMNSALYLSEMHPTGAKSKYNPGGAYYGTGYCDAQCFVTPFINGLGNIEGKGSCCNEMDIWEANSRASHVAPHTCNKKGLYLCEGEECAFEGVCDKNGCGWNNYRVNVTDYYGRGEEFKVNTLKPFTVVTQFLANRRGKLEKIHRFYVQDGKVIESFYTNKEGVPYTNMIDDEFCEATGSRKYMELGATQGMGEALTRGMVLAMSIWWDQGGNMEWLDHGEAGPCAKGEGAPSNIVQVEPFPEVTYTNLRWGEIGSTYQELQ.

Glutamine 1 is subject to Pyrrolidone carboxylic acid. 3 disulfide bridges follow: cysteine 18-cysteine 24, cysteine 51-cysteine 73, and cysteine 63-cysteine 69. The N-linked (GlcNAc...) asparagine glycan is linked to asparagine 89. Disulfide bonds link cysteine 140–cysteine 365, cysteine 172–cysteine 195, cysteine 176–cysteine 194, cysteine 215–cysteine 234, cysteine 223–cysteine 228, and cysteine 239–cysteine 315. Catalysis depends on glutamate 197, which acts as the Nucleophile. The Proton donor role is filled by glutamate 202. Residue asparagine 247 is glycosylated (N-linked (GlcNAc...) asparagine).

This sequence belongs to the glycosyl hydrolase 7 (cellulase C) family. Monomer.

Its subcellular location is the secreted. It catalyses the reaction Endohydrolysis of (1-&gt;4)-beta-D-glucosidic linkages in cellulose, lichenin and cereal beta-D-glucans.. Functionally, the biological conversion of cellulose to glucose generally requires three types of hydrolytic enzymes: (1) Endoglucanases which cut internal beta-1,4-glucosidic bonds; (2) Exocellobiohydrolases that cut the disaccharide cellobiose from the non-reducing end of the cellulose polymer chain; (3) Beta-1,4-glucosidases which hydrolyze the cellobiose and other short cello-oligosaccharides to glucose. The chain is Endoglucanase 1 (CEL7B) from Humicola insolens (Soft-rot fungus).